We begin with the raw amino-acid sequence, 154 residues long: Protein X (154 aa).

A mitochondrial targeting sequence region spans residues 68-117; the sequence is PCALRFTSARRMETTVNAHQFLPKVLYKRTLGLSVMSTTDLEAYFKDCLF.

Belongs to the orthohepadnavirus protein X family. May form homodimer. May interact with host CEBPA, CFLAR, CREB1, DDB1, E4F1, HBXIP, HSPD1/HSP60, NFKBIA, POLR2E and SMAD4. Interacts with host SMC5-SMC6 complex and induces its degradation. Interacts with host TRPC4AP; leading to prevent ubiquitination of TRPC4AP. Interacts with host PLSCR1; this interaction promotes ubiquitination and degradation of HBx and impairs HBx-mediated cell proliferation. In terms of processing, a fraction may be phosphorylated in insect cells and HepG2 cells, a human hepatoblastoma cell line. Phosphorylated in vitro by host protein kinase C or mitogen-activated protein kinase. N-acetylated in insect cells.

The protein resides in the host cytoplasm. It localises to the host nucleus. The protein localises to the host mitochondrion. Its function is as follows. Multifunctional protein that plays a role in silencing host antiviral defenses and promoting viral transcription. Does not seem to be essential for HBV infection. May be directly involved in development of cirrhosis and liver cancer (hepatocellular carcinoma). Most of cytosolic activities involve modulation of cytosolic calcium. The effect on apoptosis is controversial depending on the cell types in which the studies have been conducted. May induce apoptosis by localizing in mitochondria and causing loss of mitochondrial membrane potential. May also modulate apoptosis by binding host CFLAR, a key regulator of the death-inducing signaling complex (DISC). Promotes viral transcription by using the host E3 ubiquitin ligase DDB1 to target the SMC5-SMC6 complex to proteasomal degradation. This host complex would otherwise bind to viral episomal DNA, and prevents its transcription. Moderately stimulates transcription of many different viral and cellular transcription elements. Promoters and enhancers stimulated by HBx contain DNA binding sites for NF-kappa-B, AP-1, AP-2, c-EBP, ATF/CREB, or the calcium-activated factor NF-AT. The polypeptide is Protein X (Homo sapiens (Human)).